Consider the following 76-residue polypeptide: Mu-scoloptoxin(15)-Ssm1a (76 aa).

The N-terminal stretch at 1-23 (MEKKIIFLVFLVALLALPGFIST) is a signal peptide. The tract at residues 33–36 (KKRK) is important for inhibition of KCNQ4. Intrachain disulfides connect cysteine 43-cysteine 69 and cysteine 47-cysteine 71.

Belongs to the scoloptoxin-15 family. As to expression, expressed by the venom gland.

Its subcellular location is the secreted. Its function is as follows. Blocks voltage-gated potassium channels Kv7.4/KCNQ4 (IC(50)=2.5 uM), Kv7.1/KCNQ1 (IC(50)=2.8 uM), Kv7.2/KCNQ2 (IC(50)=2.7 uM) and Kv7.5/KCNQ5 (IC(50)=2.7 uM). Targets the pore domain, in particular negatively charged residues 'Asp-266' and 'Asp-288', of KCNQ4 and probably other KCNQ channel family members where these residues are conserved. In vivo, shows vasoconstrictive activity resulting in acute hypertension when injected intravenously in mice. Also induces coronary vasospasms ultimately leading to heart failure. Induces seizures when injected into the hippocampus of mice. Decreases respiratory rate while increasing respiratory amplitude, probably by triggering a contraction of the bronchial ring. The protein is Mu-scoloptoxin(15)-Ssm1a of Scolopendra mutilans (Chinese red-headed centipede).